The following is a 429-amino-acid chain: Maltoporin 2 (429 aa).

The first 25 residues, 1-25, serve as a signal peptide directing secretion; sequence MMITLRKLPLAVAVAAGVMSAQALA. Positions 397 to 412 are enriched in polar residues; sequence GLQTKDSSGSGAFTSS. The interval 397 to 416 is disordered; that stretch reads GLQTKDSSGSGAFTSSRGDD.

This sequence belongs to the porin LamB (TC 1.B.3) family. As to quaternary structure, homotrimer formed of three 18-stranded antiparallel beta-barrels, containing three independent channels.

The protein resides in the cell outer membrane. It carries out the reaction beta-maltose(in) = beta-maltose(out). Involved in the transport of maltose and maltodextrins. The protein is Maltoporin 2 of Klebsiella pneumoniae subsp. pneumoniae (strain ATCC 700721 / MGH 78578).